We begin with the raw amino-acid sequence, 312 residues long: Apolipoprotein E (312 aa).

The first 18 residues, 1–18 (MKALWAVLLVTLLAGCLA), serve as a signal peptide directing secretion. Tandem repeats lie at residues 72–93 (VLMEDTMTEVKAYKKELEEQLG), 94–115 (PVAEETRARLAKEVQAAQARLG), 116–137 (ADMEDLRNRLGQYRNEVHTMLG), 138–159 (QSTEEIRARLSTHLRKMRKRLM), 160–181 (RDAEDLQKRLAVYKAGAREGAE), 182–203 (RGVSALRERLGPLVEQGRQRTA), 204–225 (NLGAGAAQPLRDRAQAFGDRIR), and 226–247 (GRLEEVGNQARDRLEEVREHME). An 8 X 22 AA approximate tandem repeats region spans residues 72–247 (VLMEDTMTEV…RLEEVREHME (176 aa)). Met135 carries the methionine sulfoxide modification. Ser139 carries the phosphoserine modification. The tract at residues 150–160 (HLRKMRKRLMR) is LDL and other lipoprotein receptors binding. Residue 154 to 157 (MRKR) coordinates heparin. Residues 202 to 282 (TANLGAGAAQ…GWFEPIVEDM (81 aa)) form a lipid-binding and lipoprotein association region. Residue 221 to 228 (GDRIRGRL) participates in heparin binding. The interval 258–312 (QQIRLQAEIFQARLKGWFEPIVEDMHRQWANLMEKIQASVATNPIISTPMPQENQ) is homooligomerization. The interval 270–282 (RLKGWFEPIVEDM) is specificity for association with VLDL.

It belongs to the apolipoprotein A1/A4/E family. In terms of assembly, homotetramer. May interact with ABCA1; functionally associated with ABCA1 in the biogenesis of HDLs. May interact with APP/A4 amyloid-beta peptide; the interaction is extremely stable in vitro but its physiological significance is unclear. May interact with MAPT. May interact with MAP2. In the cerebrospinal fluid, interacts with secreted SORL1. Interacts with PMEL; this allows the loading of PMEL luminal fragment on ILVs to induce fibril nucleation. In terms of processing, APOE exists as multiple glycosylated and sialylated glycoforms within cells and in plasma. The extent of glycosylation and sialylation are tissue and context specific. Glycated in plasma VLDL. Post-translationally, phosphorylated by FAM20C in the extracellular medium.

The protein resides in the secreted. It localises to the extracellular space. The protein localises to the extracellular matrix. It is found in the extracellular vesicle. Its subcellular location is the endosome. The protein resides in the multivesicular body. APOE is an apolipoprotein, a protein associating with lipid particles, that mainly functions in lipoprotein-mediated lipid transport between organs via the plasma and interstitial fluids. APOE is a core component of plasma lipoproteins and is involved in their production, conversion and clearance. Apolipoproteins are amphipathic molecules that interact both with lipids of the lipoprotein particle core and the aqueous environment of the plasma. As such, APOE associates with chylomicrons, chylomicron remnants, very low density lipoproteins (VLDL) and intermediate density lipoproteins (IDL) but shows a preferential binding to high-density lipoproteins (HDL). It also binds a wide range of cellular receptors including the LDL receptor/LDLR, the LDL receptor-related proteins LRP1, LRP2 and LRP8 and the very low-density lipoprotein receptor/VLDLR that mediate the cellular uptake of the APOE-containing lipoprotein particles. Finally, APOE also has a heparin-binding activity and binds heparan-sulfate proteoglycans on the surface of cells, a property that supports the capture and the receptor-mediated uptake of APOE-containing lipoproteins by cells. A main function of APOE is to mediate lipoprotein clearance through the uptake of chylomicrons, VLDLs, and HDLs by hepatocytes. APOE is also involved in the biosynthesis by the liver of VLDLs as well as their uptake by peripheral tissues ensuring the delivery of triglycerides and energy storage in muscle, heart and adipose tissues. By participating in the lipoprotein-mediated distribution of lipids among tissues, APOE plays a critical role in plasma and tissues lipid homeostasis. APOE is also involved in two steps of reverse cholesterol transport, the HDLs-mediated transport of cholesterol from peripheral tissues to the liver, and thereby plays an important role in cholesterol homeostasis. First, it is functionally associated with ABCA1 in the biogenesis of HDLs in tissues. Second, it is enriched in circulating HDLs and mediates their uptake by hepatocytes. APOE also plays an important role in lipid transport in the central nervous system, regulating neuron survival and sprouting. The protein is Apolipoprotein E (Apoe) of Mus pahari (Gairdner's shrew-mouse).